The primary structure comprises 505 residues: T-cell activation inhibitor, mitochondrial (505 aa).

Residues 216–243 (LKNSLPLRKELDRLKNELSELLQLSDIR) are a coiled coil.

In terms of tissue distribution, expressed in peripheral blood leukocytes, mainly in T-lymphocytes.

The protein localises to the mitochondrion. In terms of biological role, may regulate T-cell apoptosis. The polypeptide is T-cell activation inhibitor, mitochondrial (Tcaim) (Rattus norvegicus (Rat)).